Reading from the N-terminus, the 581-residue chain is Lipoprotein LpqB (581 aa).

The N-terminal stretch at 1–23 (MRNHVSRYLTALIAVGCAATTAA) is a signal peptide. Residue Cys-24 is the site of N-palmitoyl cysteine attachment. Cys-24 is lipidated: S-diacylglycerol cysteine.

This sequence belongs to the LpqB lipoprotein family.

The protein localises to the cell membrane. The polypeptide is Lipoprotein LpqB (Corynebacterium diphtheriae (strain ATCC 700971 / NCTC 13129 / Biotype gravis)).